The sequence spans 342 residues: Galactose mutarotase (342 aa).

Position 14 is a phosphoserine (Ser-14). Residues 81-82 (NR) and His-107 each bind beta-D-galactose. Ser-124 carries the phosphoserine modification. Catalysis depends on His-176, which acts as the Proton donor. Beta-D-galactose contacts are provided by residues 176–178 (HSY), Asp-243, Gln-279, and Glu-307. Residue Glu-307 is the Proton acceptor of the active site.

Belongs to the aldose epimerase family. In terms of assembly, monomer.

It localises to the cytoplasm. It carries out the reaction alpha-D-galactose = beta-D-galactose. The enzyme catalyses alpha-D-glucose = beta-D-glucose. It functions in the pathway carbohydrate metabolism; hexose metabolism. The protein operates within carbohydrate metabolism; galactose metabolism. In terms of biological role, mutarotase that catalyzes the interconversion of beta-D-galactose and alpha-D-galactose during galactose metabolism. Beta-D-galactose is metabolized in the liver into glucose 1-phosphate, the primary metabolic fuel, by the action of four enzymes that constitute the Leloir pathway: GALM, GALK1 (galactokinase), GALT (galactose-1-phosphate uridylyltransferase) and GALE (UDP-galactose-4'-epimerase). Involved in the maintenance of the equilibrium between the beta- and alpha-anomers of galactose, therefore ensuring a sufficient supply of the alpha-anomer for GALK1. Also active on D-glucose although shows a preference for galactose over glucose. This Sus scrofa (Pig) protein is Galactose mutarotase (GALM).